The chain runs to 173 residues: Crossover junction endodeoxyribonuclease RuvC (173 aa).

Active-site residues include aspartate 8, glutamate 67, and aspartate 139. Positions 8, 67, and 139 each coordinate Mg(2+).

Belongs to the RuvC family. Homodimer which binds Holliday junction (HJ) DNA. The HJ becomes 2-fold symmetrical on binding to RuvC with unstacked arms; it has a different conformation from HJ DNA in complex with RuvA. In the full resolvosome a probable DNA-RuvA(4)-RuvB(12)-RuvC(2) complex forms which resolves the HJ. Mg(2+) serves as cofactor.

It is found in the cytoplasm. It catalyses the reaction Endonucleolytic cleavage at a junction such as a reciprocal single-stranded crossover between two homologous DNA duplexes (Holliday junction).. The RuvA-RuvB-RuvC complex processes Holliday junction (HJ) DNA during genetic recombination and DNA repair. Endonuclease that resolves HJ intermediates. Cleaves cruciform DNA by making single-stranded nicks across the HJ at symmetrical positions within the homologous arms, yielding a 5'-phosphate and a 3'-hydroxyl group; requires a central core of homology in the junction. The consensus cleavage sequence is 5'-(A/T)TT(C/G)-3'. Cleavage occurs on the 3'-side of the TT dinucleotide at the point of strand exchange. HJ branch migration catalyzed by RuvA-RuvB allows RuvC to scan DNA until it finds its consensus sequence, where it cleaves and resolves the cruciform DNA. The sequence is that of Crossover junction endodeoxyribonuclease RuvC from Shewanella baltica (strain OS223).